A 428-amino-acid chain; its full sequence is Glucose-1-phosphate adenylyltransferase (428 aa).

Alpha-D-glucose 1-phosphate contacts are provided by residues Tyr-114, Gly-179, 194–195 (EK), and Ser-212.

Belongs to the bacterial/plant glucose-1-phosphate adenylyltransferase family. As to quaternary structure, homotetramer.

The enzyme catalyses alpha-D-glucose 1-phosphate + ATP + H(+) = ADP-alpha-D-glucose + diphosphate. Its pathway is glycan biosynthesis; glycogen biosynthesis. Involved in the biosynthesis of ADP-glucose, a building block required for the elongation reactions to produce glycogen. Catalyzes the reaction between ATP and alpha-D-glucose 1-phosphate (G1P) to produce pyrophosphate and ADP-Glc. The chain is Glucose-1-phosphate adenylyltransferase from Yersinia pseudotuberculosis serotype IB (strain PB1/+).